A 224-amino-acid polypeptide reads, in one-letter code: UPF0173 metal-dependent hydrolase EF_1371 (224 aa).

It belongs to the UPF0173 family.

The chain is UPF0173 metal-dependent hydrolase EF_1371 from Enterococcus faecalis (strain ATCC 700802 / V583).